Reading from the N-terminus, the 247-residue chain is Reticulon-like protein B8 (247 aa).

The Reticulon domain occupies 61–247 (SADVLLWRNK…SGKFGLKKRE (187 aa)). A run of 3 helical transmembrane segments spans residues 71–91 (KISASVLMGATAIWVLFEWIN), 92–112 (FHFLSLVCYALLLGMIAQFVW), and 166–186 (FLMAVIGLWVAAMVGSCCNFL).

The protein localises to the endoplasmic reticulum membrane. The protein is Reticulon-like protein B8 (RTNLB8) of Arabidopsis thaliana (Mouse-ear cress).